Consider the following 469-residue polypeptide: Glutamate--tRNA ligase (469 aa).

A 'HIGH' region motif is present at residues 11–21; that stretch reads PSPTGFIHLGN. The 'KMSKS' region motif lies at 243–247; that stretch reads KMSKR. K246 contacts ATP.

Belongs to the class-I aminoacyl-tRNA synthetase family. Glutamate--tRNA ligase type 1 subfamily. In terms of assembly, monomer.

Its subcellular location is the cytoplasm. It carries out the reaction tRNA(Glu) + L-glutamate + ATP = L-glutamyl-tRNA(Glu) + AMP + diphosphate. Catalyzes the attachment of glutamate to tRNA(Glu) in a two-step reaction: glutamate is first activated by ATP to form Glu-AMP and then transferred to the acceptor end of tRNA(Glu). This Burkholderia cenocepacia (strain ATCC BAA-245 / DSM 16553 / LMG 16656 / NCTC 13227 / J2315 / CF5610) (Burkholderia cepacia (strain J2315)) protein is Glutamate--tRNA ligase.